A 418-amino-acid polypeptide reads, in one-letter code: Glutamyl-tRNA reductase (418 aa).

Substrate contacts are provided by residues 49-52, Ser106, 111-113, and Gln117; these read TCNR and EPQ. Residue Cys50 is the Nucleophile of the active site. 186-191 is a binding site for NADP(+); it reads GAGEMI.

Belongs to the glutamyl-tRNA reductase family. Homodimer.

It catalyses the reaction (S)-4-amino-5-oxopentanoate + tRNA(Glu) + NADP(+) = L-glutamyl-tRNA(Glu) + NADPH + H(+). It functions in the pathway porphyrin-containing compound metabolism; protoporphyrin-IX biosynthesis; 5-aminolevulinate from L-glutamyl-tRNA(Glu): step 1/2. Catalyzes the NADPH-dependent reduction of glutamyl-tRNA(Glu) to glutamate 1-semialdehyde (GSA). The sequence is that of Glutamyl-tRNA reductase from Alcanivorax borkumensis (strain ATCC 700651 / DSM 11573 / NCIMB 13689 / SK2).